The primary structure comprises 254 residues: UPF0246 protein FTM_0239 (254 aa).

The protein belongs to the UPF0246 family.

The sequence is that of UPF0246 protein FTM_0239 from Francisella tularensis subsp. mediasiatica (strain FSC147).